The chain runs to 264 residues: Thiazole synthase (264 aa).

The Schiff-base intermediate with DXP role is filled by Lys-100. Residues Gly-161, 187–188, and 209–210 each bind 1-deoxy-D-xylulose 5-phosphate; these read AG and NT.

This sequence belongs to the ThiG family. Homotetramer. Forms heterodimers with either ThiH or ThiS.

It localises to the cytoplasm. It carries out the reaction [ThiS sulfur-carrier protein]-C-terminal-Gly-aminoethanethioate + 2-iminoacetate + 1-deoxy-D-xylulose 5-phosphate = [ThiS sulfur-carrier protein]-C-terminal Gly-Gly + 2-[(2R,5Z)-2-carboxy-4-methylthiazol-5(2H)-ylidene]ethyl phosphate + 2 H2O + H(+). It participates in cofactor biosynthesis; thiamine diphosphate biosynthesis. Functionally, catalyzes the rearrangement of 1-deoxy-D-xylulose 5-phosphate (DXP) to produce the thiazole phosphate moiety of thiamine. Sulfur is provided by the thiocarboxylate moiety of the carrier protein ThiS. In vitro, sulfur can be provided by H(2)S. The chain is Thiazole synthase from Nitrosospira multiformis (strain ATCC 25196 / NCIMB 11849 / C 71).